Here is a 259-residue protein sequence, read N- to C-terminus: MIEINNKIDYIFYTNNTPNTYKIQLILLELQKEYGITFESRFINVFKKENYSDDYIKINPNKKVPAIVDQTGEKPFIVFESVSILIYLAQKFNTFLPDFKTNPLENSEVITWTVWQAANLGPAFGQYFHFSFFSPTVQEYSLHRFNNEAQRILRLLDDRLSSTYIGGNEFSIADIASAGWLLYLNSAPLYNATKERFPNIFKWLDLINQRESIKQVNQSISDGFKNFNPSLLRALFTNDPELINAKAPIGIENVILKYD.

The 90-residue stretch at 7–96 (KIDYIFYTNN…YLAQKFNTFL (90 aa)) folds into the GST N-terminal domain. The GST C-terminal domain occupies 102-232 (NPLENSEVIT…GFKNFNPSLL (131 aa)).

It belongs to the GST superfamily.

This is Glutathione S-transferase domain-containing protein DDB_G0274705 from Dictyostelium discoideum (Social amoeba).